The primary structure comprises 430 residues: Adenylosuccinate synthetase (430 aa).

GTP-binding positions include 12–18 (GDEGKGK) and 40–42 (GHT). Aspartate 13 acts as the Proton acceptor in catalysis. Residues aspartate 13 and glycine 40 each contribute to the Mg(2+) site. Residues 13 to 16 (DEGK), 38 to 41 (NAGH), threonine 128, arginine 142, glutamine 223, threonine 238, and arginine 302 each bind IMP. Catalysis depends on histidine 41, which acts as the Proton donor. Substrate is bound at residue 298–304 (TTTGRPR). Residues arginine 304, 330 to 332 (CID), and 412 to 414 (SVG) each bind GTP.

The protein belongs to the adenylosuccinate synthetase family. Homodimer. It depends on Mg(2+) as a cofactor.

The protein localises to the cytoplasm. It catalyses the reaction IMP + L-aspartate + GTP = N(6)-(1,2-dicarboxyethyl)-AMP + GDP + phosphate + 2 H(+). Its pathway is purine metabolism; AMP biosynthesis via de novo pathway; AMP from IMP: step 1/2. Functionally, plays an important role in the de novo pathway of purine nucleotide biosynthesis. Catalyzes the first committed step in the biosynthesis of AMP from IMP. This chain is Adenylosuccinate synthetase, found in Streptococcus thermophilus (strain CNRZ 1066).